A 64-amino-acid chain; its full sequence is Prokaryotic ubiquitin-like protein Pup (64 aa).

The interval methionine 1 to aspartate 37 is disordered. The ARC ATPase binding stretch occupies residues threonine 21–tyrosine 58. The stretch at glycine 25–glutamate 52 forms a coiled coil. Glutamine 64 is subject to Deamidated glutamine. An Isoglutamyl lysine isopeptide (Gln-Lys) (interchain with K-? in acceptor proteins) cross-link involves residue glutamine 64.

This sequence belongs to the prokaryotic ubiquitin-like protein family. Strongly interacts with the proteasome-associated ATPase ARC through a hydrophobic interface; the interacting region of Pup lies in its C-terminal half. There is one Pup binding site per ARC hexamer ring. In terms of processing, is modified by deamidation of its C-terminal glutamine to glutamate by the deamidase Dop, a prerequisite to the subsequent pupylation process.

It functions in the pathway protein degradation; proteasomal Pup-dependent pathway. Protein modifier that is covalently attached to lysine residues of substrate proteins, thereby targeting them for proteasomal degradation. The tagging system is termed pupylation. This Mycobacterium marinum (strain ATCC BAA-535 / M) protein is Prokaryotic ubiquitin-like protein Pup.